We begin with the raw amino-acid sequence, 273 residues long: Bis(5'-nucleosyl)-tetraphosphatase, symmetrical (273 aa).

The protein belongs to the Ap4A hydrolase family.

The catalysed reaction is P(1),P(4)-bis(5'-adenosyl) tetraphosphate + H2O = 2 ADP + 2 H(+). Hydrolyzes diadenosine 5',5'''-P1,P4-tetraphosphate to yield ADP. The chain is Bis(5'-nucleosyl)-tetraphosphatase, symmetrical from Proteus mirabilis (strain HI4320).